The chain runs to 417 residues: WD repeat and FYVE domain-containing protein 2 (417 aa).

4 WD repeats span residues 29–68, 119–157, 202–241, and 245–284; these read GHVA…QFWP, CHAG…NKVG, AHTN…GEAY, and GHNG…VETP. The FYVE-type zinc finger occupies 286–357; the sequence is WKTSDCCQKC…ICNDCAGRMK (72 aa). Zn(2+)-binding residues include cysteine 292, cysteine 295, cysteine 319, cysteine 322, cysteine 327, cysteine 330, cysteine 349, and cysteine 352. One copy of the WD 5 repeat lies at 373-412; that stretch reads EIRTGITAMHLQETLGLLVTSGQNRVVMIWDVRSVCSAPS.

Plays a role in coelomocyte endocytosis. The sequence is that of WD repeat and FYVE domain-containing protein 2 from Caenorhabditis briggsae.